The chain runs to 463 residues: FAD-dependent monooxygenase ausM (463 aa).

3 residues coordinate FAD: E40, G54, and R113. Y217 is an active-site residue. 2 residues coordinate FAD: D309 and A322. Residues 443–463 (VPWLVISLPVLASVLCYLMFA) traverse the membrane as a helical segment.

The protein belongs to the paxM FAD-dependent monooxygenase family. FAD serves as cofactor.

It is found in the membrane. The protein operates within secondary metabolite biosynthesis; terpenoid biosynthesis. Its function is as follows. FAD-dependent monooxygenase; part of the gene cluster that mediates the biosynthesis of calidodehydroaustin, a fungal meroterpenoid. The first step of the pathway is the synthesis of 3,5-dimethylorsellinic acid by the polyketide synthase ausA. 3,5-dimethylorsellinic acid is then prenylated by the polyprenyl transferase ausN. Further epoxidation by the FAD-dependent monooxygenase ausM and cyclization by the probable terpene cyclase ausL lead to the formation of protoaustinoid A. Protoaustinoid A is then oxidized to spiro-lactone preaustinoid A3 by the combined action of the FAD-binding monooxygenases ausB and ausC, and the dioxygenase ausE. Acid-catalyzed keto-rearrangement and ring contraction of the tetraketide portion of preaustinoid A3 by ausJ lead to the formation of preaustinoid A4. The aldo-keto reductase ausK, with the help of ausH, is involved in the next step by transforming preaustinoid A4 into isoaustinone which is in turn hydroxylated by the P450 monooxygenase ausI to form austinolide. The cytochrome P450 monooxygenase ausG modifies austinolide to austinol. Austinol is further acetylated to austin by the O-acetyltransferase ausP, which spontaneously changes to dehydroaustin. The cytochrome P450 monooxygenase ausR then converts dehydroaustin is into 7-dehydrodehydroaustin. The hydroxylation catalyzed by ausR permits the O-acetyltransferase ausQ to add an additional acetyl group to the molecule, leading to the formation of acetoxydehydroaustin. The short chain dehydrogenase ausT catalyzes the reduction of the double bond present between carbon atoms 1 and 2 to convert 7-dehydrodehydroaustin into 1,2-dihydro-7-hydroxydehydroaustin. AusQ catalyzes not only an acetylation reaction but also the addition of the PKS ausV diketide product to 1,2-dihydro-7-hydroxydehydroaustin, forming precalidodehydroaustin. Finally, the iron/alpha-ketoglutarate-dependent dioxygenase converts precalidodehydroaustin into calidodehydroaustin. This Aspergillus calidoustus protein is FAD-dependent monooxygenase ausM.